A 1216-amino-acid polypeptide reads, in one-letter code: MKLIPFLSEEEIQKLQEAEANSSKEQKKTAEQIEAIYTSGQNILVSASAGSGKTFVMAERILDQLARGVEISQLFISTFTVKAATELKERLEKKISKKIQETDDVDLKQHLGRQLADLPNAAIGTMDSFTQKFLGKHGYLLDIAPNFRILQNQSEQLLLENEVFHEVFEAHYQGKQKETFSHLLKNFAGRGKDERGLRQQVYKIYDFLQSTSNPQKWLSKSFLKGFEKADFTSEKEKLTEQIKQALWDLESFFRYHLDNDAKEFAKAAYLENVQLILDEIDSLNQESDSQAYQAVLARVVAISKEKNGRALTNASRKADLKPLADTYNEERKTQFAKLGQLSDQIAILDYQERYHGDTWKLAKTFQSFMSDFVEAYRQRKRQENAFEFADISHYTIEILENFPQVRESYQERFHEVMVDEYQDTNHIQERMLELLSNGHNRFMVGDIKQSIYRFRQADPQIFNEKFQRYAQNPQEGKLILLKENFRSSSEVLSATNDVFERLMDQEVGEINYDNKHQLVFANTKLTPNPDNKAEFLLYDKDDTGEEEESQTETKLTGEMRLVIKEILKLHQEKGVAFKEIALLTSSRNRNDQILLALSEYGIPVKTDGEQNNYLQSLEVQVMLDTLRVIHNPLQDYALVALMKSPMFGFDEDELARLSLQKAEDKAHENLYEKLVNAQKKASSQKGLIHTALAEKLKQFMDILASWRLYAKPHSLYDLIWKIYNDRFYYDYVGALPNGPARQANLYALALRADQFEKSNFKGLSRFIRMIDQVLEAQHDLASVAVAPPKDAVELMTIHKSKGLEFPYVFILNMDQDFNKQDSMSEVILSRQNGLGVKYIAKMETGAVEDHYPKTIKLSIPSLTYRQNEEELQLASYSEQMRLLYVAMTRAEKKLYLVGKGSREKLEAKQYPAAKNGKLNSNTRLQARNFQDWLWAISKVFTKDKLNFSYRFIGEDQLTREAIGELETKSPLRDSSQADNRQSDTIKEALEMLKEVEVYNTLHRAAIELPSVQTPSQIKKFYEPVMDMEGVEIAGQGQSVGKKISFDLPDFSTKEKVTGAEIGSATHELMQRIDLSQQLTLASLTETLKQVQTSQAVRDKINLDKILAFFDTVLGQEILANTDHLYREQPFSMLKRDQKSQEDFVVRGILDGYLLYENKIVLFDYKTDRYDEPSQLVDRYRGQLALYEEALSRAYSIKNIEKYLILLGKDEVQVVKV.

Positions glutamine 26–serine 488 constitute a UvrD-like helicase ATP-binding domain. Alanine 47–threonine 54 contributes to the ATP binding site. The UvrD-like helicase C-terminal domain occupies lysine 515–glycine 802.

The protein belongs to the helicase family. AddA subfamily. As to quaternary structure, heterodimer of AddA and AddB/RexB. Mg(2+) is required as a cofactor.

The catalysed reaction is Couples ATP hydrolysis with the unwinding of duplex DNA by translocating in the 3'-5' direction.. It catalyses the reaction ATP + H2O = ADP + phosphate + H(+). In terms of biological role, the heterodimer acts as both an ATP-dependent DNA helicase and an ATP-dependent, dual-direction single-stranded exonuclease. Recognizes the chi site generating a DNA molecule suitable for the initiation of homologous recombination. The AddA nuclease domain is required for chi fragment generation; this subunit has the helicase and 3' -&gt; 5' nuclease activities. This is ATP-dependent helicase/nuclease subunit A from Streptococcus pneumoniae (strain CGSP14).